The primary structure comprises 441 residues: Methionine aminopeptidase 2A (441 aa).

Residues 1–103 are disordered; it reads MAIGNPEVAT…SGDFPQGEIQ (103 aa). A compositionally biased stretch (polar residues) spans 18–33; it reads AESSNGNESQLSSDLT. The segment covering 37 to 62 has biased composition (basic and acidic residues); the sequence is DLAEVKEDEKDNNQEEEDGLKAEAST. The span at 63–76 shows a compositional bias: basic residues; the sequence is KKKKKKSKSKKKKS. H194 is a substrate binding site. A divalent metal cation is bound by residues D214, D225, and H294. Residue H302 participates in substrate binding. A divalent metal cation contacts are provided by E327 and E422.

This sequence belongs to the peptidase M24A family. Methionine aminopeptidase eukaryotic type 2 subfamily. Requires Co(2+) as cofactor. Zn(2+) serves as cofactor. The cofactor is Mn(2+). It depends on Fe(2+) as a cofactor. As to expression, ubiquitous. Preferentially expressed in roots.

Its subcellular location is the cytoplasm. It catalyses the reaction Release of N-terminal amino acids, preferentially methionine, from peptides and arylamides.. In terms of biological role, cotranslationally removes the N-terminal methionine from nascent proteins. The N-terminal methionine is often cleaved when the second residue in the primary sequence is small and uncharged (Met-Ala-, Cys, Gly, Pro, Ser, Thr, or Val). This Arabidopsis thaliana (Mouse-ear cress) protein is Methionine aminopeptidase 2A.